A 499-amino-acid polypeptide reads, in one-letter code: Probable cytosol aminopeptidase (499 aa).

Mn(2+) contacts are provided by lysine 269 and aspartate 274. Lysine 281 is an active-site residue. Mn(2+) is bound by residues aspartate 292, aspartate 351, and glutamate 353. The active site involves arginine 355.

The protein belongs to the peptidase M17 family. The cofactor is Mn(2+).

The protein localises to the cytoplasm. The enzyme catalyses Release of an N-terminal amino acid, Xaa-|-Yaa-, in which Xaa is preferably Leu, but may be other amino acids including Pro although not Arg or Lys, and Yaa may be Pro. Amino acid amides and methyl esters are also readily hydrolyzed, but rates on arylamides are exceedingly low.. It carries out the reaction Release of an N-terminal amino acid, preferentially leucine, but not glutamic or aspartic acids.. Its function is as follows. Presumably involved in the processing and regular turnover of intracellular proteins. Catalyzes the removal of unsubstituted N-terminal amino acids from various peptides. In Actinobacillus pleuropneumoniae serotype 5b (strain L20), this protein is Probable cytosol aminopeptidase.